The primary structure comprises 625 residues: tRNA uridine 5-carboxymethylaminomethyl modification enzyme MnmG (625 aa).

Residues 10–15 (GGGHAG), valine 122, and serine 177 contribute to the FAD site. NAD(+) is bound at residue 271–285 (GPRYCPSIEDKVNRF). Residue glutamine 368 coordinates FAD.

It belongs to the MnmG family. Homodimer. Heterotetramer of two MnmE and two MnmG subunits. It depends on FAD as a cofactor.

It localises to the cytoplasm. In terms of biological role, NAD-binding protein involved in the addition of a carboxymethylaminomethyl (cmnm) group at the wobble position (U34) of certain tRNAs, forming tRNA-cmnm(5)s(2)U34. This is tRNA uridine 5-carboxymethylaminomethyl modification enzyme MnmG from Wolinella succinogenes (strain ATCC 29543 / DSM 1740 / CCUG 13145 / JCM 31913 / LMG 7466 / NCTC 11488 / FDC 602W) (Vibrio succinogenes).